A 697-amino-acid polypeptide reads, in one-letter code: Sialic acid-binding Ig-like lectin 10 (697 aa).

The N-terminal stretch at 1-16 (MLLPLLLSSLLGGSQA) is a signal peptide. Residues 17–550 (MDGRFWIRVQ…KGLISTAFSN (534 aa)) lie on the Extracellular side of the membrane. In terms of domain architecture, Ig-like V-type spans 18–121 (DGRFWIRVQE…DESQYFFRVE (104 aa)). Intrachain disulfides connect cysteine 36/cysteine 173, cysteine 41/cysteine 101, cysteine 164/cysteine 215, and cysteine 276/cysteine 323. N-linked (GlcNAc...) asparagine glycosylation occurs at asparagine 100. Residue arginine 119 participates in N-acetylneuraminate binding. Ig-like C2-type domains lie at 146–231 (PDVY…RTVR), 251–339 (PALE…LDLS), and 344–441 (PENL…LSLS). N-linked (GlcNAc...) asparagine glycans are attached at residues asparagine 355 and asparagine 364. Cysteine 380 and cysteine 425 are disulfide-bonded. N-linked (GlcNAc...) asparagine glycans are attached at residues asparagine 486 and asparagine 504. A helical membrane pass occupies residues 551-571 (GAFLGIGITALLFLCLALIIM). At 572 to 697 (KILPKRRTQT…QADYAEVKFQ (126 aa)) the chain is on the cytoplasmic side. The short motif at 595–600 (LDYINV) is the ITIM motif 1 element. Residues 606 to 697 (PLAQKRNQKA…QADYAEVKFQ (92 aa)) form a disordered region. The span at 620-629 (PRTPLPPGAP) shows a compositional bias: pro residues. Residues 650 to 659 (KSSTQAPESQ) are compositionally biased toward polar residues. Residues 665-670 (LHYATL) carry the ITIM motif 2 motif. At tyrosine 667 the chain carries Phosphotyrosine.

This sequence belongs to the immunoglobulin superfamily. SIGLEC (sialic acid binding Ig-like lectin) family. As to quaternary structure, interacts with PTPN6/SHP-1 upon phosphorylation. Interacts with NCF1. Interacts with CD24; the probable CD24:SIGLEC10 complex is proposed to inhibit HGMB1-mediated tissue damage immune response. Interacts with HMGB1; the interaction is dependent on CD24. Interacts with RIGI, CBL and PTPN11. Phosphorylation of Tyr-667 is involved in binding to PTPN6. As to expression, expressed by peripheral blood leukocytes (eosinophils, monocytes and a natural killer cell subpopulation). Isoform 5 is found to be the most abundant isoform. Found in lymph node, lung, ovary and appendix. Isoform 1 is found at high levels and isoform 2 at lower levels in bone marrow, spleen and spinal cord. Isoform 2 is also found in brain. Isoform 4 is specifically found in natural killer cells.

The protein resides in the cell membrane. The protein localises to the secreted. Putative adhesion molecule that mediates sialic-acid dependent binding to cells. Preferentially binds to alpha-2,3- or alpha-2,6-linked sialic acid. The sialic acid recognition site may be masked by cis interactions with sialic acids on the same cell surface. In the immune response, seems to act as an inhibitory receptor upon ligand induced tyrosine phosphorylation by recruiting cytoplasmic phosphatase(s) via their SH2 domain(s) that block signal transduction through dephosphorylation of signaling molecules. Involved in negative regulation of B-cell antigen receptor signaling. The inhibition of B cell activation is dependent on PTPN6/SHP-1. In association with CD24 may be involved in the selective suppression of the immune response to danger-associated molecular patterns (DAMPs) such as HMGB1, HSP70 and HSP90. In association with CD24 may regulate the immune repsonse of natural killer (NK) cells. Plays a role in the control of autoimmunity. During initiation of adaptive immune responses by CD8-alpha(+) dendritic cells inhibits cross-presentation by impairing the formation of MHC class I-peptide complexes. The function seems to implicate recruitment of PTPN6/SHP-1, which dephosphorylates NCF1 of the NADPH oxidase complex consequently promoting phagosomal acidification. In Homo sapiens (Human), this protein is Sialic acid-binding Ig-like lectin 10 (SIGLEC10).